The sequence spans 488 residues: MGNCFGSRGICDRPKNTNIRLSLPAVCFVWQVSMIILFGVFVRYNEEADTNWVYTKKEKNITSDIENDFYFRYPSFQDVHVMIFVGFGFLMTFLKRYSFGAVGFNFLIAAFGLQWALLMQGWFSPLGDDGKIKIGIENLINADFCVASCLIAYGAVLGKVSPVQLLVMTLFGITLYAVEEFIILRVLNAKDAGGSMVIHTFGAYYGLSISRVLYRPNLNKSKHMNGSVYHSDVFAMIGTLFLWMFWPSFNSAICNHGDGQHRAAINTYLALASTVLTTVAISSMFEKTGKLDMVHIQNSTLAGGVAVGTAAEFMLMPYGSLIVGFFCGIISTLGYIYLTPFLEERLKIQDTCGIHNLHAMPGVIGGIVGAISAAAASKEVYGDLGLKNIFSIEGSNVTRLPTVQGGYQAAALCVALCFGIGGGTFVGLVLKLPIWGDPADEHCFNDEMYWEVPEDEESIIPPVLSYNNHMIPNNKHEEMRETNFAEQS.

Residues 1–21 (MGNCFGSRGICDRPKNTNIRL) lie on the Cytoplasmic side of the membrane. Residues 22-42 (SLPAVCFVWQVSMIILFGVFV) form a helical membrane-spanning segment. Residues 43–73 (RYNEEADTNWVYTKKEKNITSDIENDFYFRY) are Extracellular-facing. The N-linked (GlcNAc...) asparagine glycan is linked to asparagine 60. The chain crosses the membrane as a helical span at residues 74 to 94 (PSFQDVHVMIFVGFGFLMTFL). At 95–98 (KRYS) the chain is on the cytoplasmic side. A helical membrane pass occupies residues 99 to 119 (FGAVGFNFLIAAFGLQWALLM). Residues 120–139 (QGWFSPLGDDGKIKIGIENL) lie on the Extracellular side of the membrane. A helical membrane pass occupies residues 140-160 (INADFCVASCLIAYGAVLGKV). Residues 161–162 (SP) lie on the Cytoplasmic side of the membrane. A helical membrane pass occupies residues 163-183 (VQLLVMTLFGITLYAVEEFII). The Extracellular segment spans residues 184 to 191 (LRVLNAKD). The helical transmembrane segment at 192–214 (AGGSMVIHTFGAYYGLSISRVLY) threads the bilayer. Over 215 to 232 (RPNLNKSKHMNGSVYHSD) the chain is Cytoplasmic. The chain crosses the membrane as a helical span at residues 233 to 253 (VFAMIGTLFLWMFWPSFNSAI). Residues 254–264 (CNHGDGQHRAA) are Extracellular-facing. A helical membrane pass occupies residues 265 to 285 (INTYLALASTVLTTVAISSMF). Residues 286-298 (EKTGKLDMVHIQN) are Cytoplasmic-facing. A helical transmembrane segment spans residues 299–319 (STLAGGVAVGTAAEFMLMPYG). A topological domain (extracellular) is located at residue serine 320. Residues 321–341 (LIVGFFCGIISTLGYIYLTPF) form a helical membrane-spanning segment. Residues 342–356 (LEERLKIQDTCGIHN) are Cytoplasmic-facing. A helical membrane pass occupies residues 357-377 (LHAMPGVIGGIVGAISAAAAS). The Extracellular portion of the chain corresponds to 378-409 (KEVYGDLGLKNIFSIEGSNVTRLPTVQGGYQA). Residues 410 to 430 (AALCVALCFGIGGGTFVGLVL) form a helical membrane-spanning segment. Residues 431 to 488 (KLPIWGDPADEHCFNDEMYWEVPEDEESIIPPVLSYNNHMIPNNKHEEMRETNFAEQS) lie on the Cytoplasmic side of the membrane.

It belongs to the ammonium transporter (TC 2.A.49) family. Rh subfamily. In terms of assembly, homotrimer. At larval stages, expressed only in the yolk sac and gill. However, the kidney and the gills are major sites of expression in adults.

The protein resides in the apical cell membrane. Its function is as follows. Functions as an ammonia transporter. May play a role in the elimination of ammonia in the gill. This Danio rerio (Zebrafish) protein is Ammonium transporter Rh type C-like 2 (rhcgl2).